We begin with the raw amino-acid sequence, 686 residues long: Amphiphysin (686 aa).

Coiled coils occupy residues 10-83 (AKNV…SLHE) and 144-191 (DYDS…QEEL). One can recognise a BAR domain in the interval 24–240 (VLQKLGKADE…MTKLGDQHAD (217 aa)). Disordered stretches follow at residues 244–314 (SIQG…PTKE), 421–441 (AETE…ATAA), and 483–597 (VEEA…AGAV). At S252 the chain carries Phosphoserine. Position 260 is a phosphothreonine (T260). A compositionally biased stretch (pro residues) spans 261–274 (PSPPEEPSPLPSPT). A phosphoserine mark is found at S262, S268, S272, and S276. T280 is modified (phosphothreonine). Over residues 424–441 (EQALPTEPQAEEPPATAA) the composition is skewed to low complexity. S500 carries the phosphoserine modification. Residues 541–562 (SNHEGEGEHQETATGTEPREAA) show a composition bias toward basic and acidic residues. One can recognise an SH3 domain in the interval 613–686 (GFLYKVETLH…FPENFTRRLE (74 aa)). At S629 the chain carries Phosphoserine.

As to quaternary structure, heterodimer with BIN1. Binds SH3GLB1. Interacts with REPS1 and SGIP1. Binds AP2A2. Interacts with AP2B1. Interacts with DNM1 and SYNJ1.

It is found in the cytoplasmic vesicle. The protein localises to the secretory vesicle. Its subcellular location is the synaptic vesicle membrane. The protein resides in the cytoplasm. It localises to the cytoskeleton. In terms of biological role, may participate in mechanisms of regulated exocytosis in synapses and certain endocrine cell types. May control the properties of the membrane associated cytoskeleton. The chain is Amphiphysin (Amph) from Mus musculus (Mouse).